The primary structure comprises 211 residues: Protein 33K (211 aa).

Disordered stretches follow at residues 1–95 (MPPK…PCSL) and 107–140 (AGSPTAPAAPTKRLEKTPRVRKTSSAIATRQDSP). The segment covering 24-65 (DEEETWDDSQAEEVSDEEAEEQMESWDSLDEEDLEDVEEETI) has biased composition (acidic residues). The span at 83 to 92 (KTIPPLPPQP) shows a compositional bias: pro residues. The span at 129–140 (TSSAIATRQDSP) shows a compositional bias: polar residues. The segment at 154-181 (YAIFQQSRGQQLELKVKNRSLRSLTRSC) is necessary for nuclear subcellular location. Positions 160–180 (SRGQQLELKVKNRSLRSLTRS) are RS-repeat; required for splicing enhancer activity.

Belongs to the adenoviridae splicing factor family. As to quaternary structure, homooligomer. Interacts with DBP; this interaction occurs at a unique vertex during genome packaging. Interacts with IVa2; this interaction occurs at a unique vertex during genome packaging and seems to potentiate IVa2 and 33K oligomerization. Phosphorylated in vitro by human PKA and PRKDC. PRKDC inhibits, whereas PKA activates the splicing factor.

It is found in the host nucleus. In terms of biological role, promotes alternative splicing of late transcripts by promoting splicing at weak 3' splice sites. Required for the temporal activation of major late pre-mRNA splicing at late times of infection. Induces the splicing and expression of the late capsid vertex protein. Its function is as follows. Probably functions as the small terminase that is part of the molecular motor that translocates genomic DNA in empty capsid during DNA packaging. This motor is located at a unique vertex and comprises at least the IVa2 ATPase, the small terminase 33K and probably a portal. Forms a ring-like structure of about 17 nm in which genomic DNA is translocated into the capsid. Stimulates IVa2 ATPase activity in the presence of the viral genome. Once the DNA is packaged, the terminase detaches: the 33K protein is present in the empty particles, but not in the mature virions. Also involved in virion assembly. The sequence is that of Protein 33K from Human adenovirus F serotype 40 (HAdV-40).